Reading from the N-terminus, the 182-residue chain is Transcription termination/antitermination protein NusG (182 aa).

It belongs to the NusG family.

Its function is as follows. Participates in transcription elongation, termination and antitermination. In Chlamydia pneumoniae (Chlamydophila pneumoniae), this protein is Transcription termination/antitermination protein NusG.